Reading from the N-terminus, the 213-residue chain is E3 ubiquitin-protein ligase NleG8 (213 aa).

The segment at 136–189 (CPITLCVPETGVFVKNARCSKVCSLYDISALTEMLRRNASHPLSREAFTPGMIV) is RING/U-box domain. A PDZ-binding motif motif is present at residues 211–213 (TRL).

It belongs to the NleG E3 ligase family. In terms of assembly, interacts with host GOPC (human protein).

Its subcellular location is the secreted. The protein localises to the host cytoplasm. It carries out the reaction S-ubiquitinyl-[E2 ubiquitin-conjugating enzyme]-L-cysteine + [acceptor protein]-L-lysine = [E2 ubiquitin-conjugating enzyme]-L-cysteine + N(6)-ubiquitinyl-[acceptor protein]-L-lysine.. Functionally, effector proteins function to alter host cell physiology and promote bacterial survival in host tissues. This protein is an E3 ubiquitin-protein ligase that probably interferes with the host's ubiquitination pathway and targets host proteins for proteasomal degradation. Mice infected with a strain of bacteria deleted for this gene had an increased survival rate. Can be ubiquitinylated, and ubiquitinate ubiquitin, giving rise to polyubiquitin chains (in vitro). The sequence is that of E3 ubiquitin-protein ligase NleG8 from Citrobacter rodentium.